We begin with the raw amino-acid sequence, 323 residues long: Mortality factor 4-like protein 1 (323 aa).

The 51-residue stretch at 12 to 62 folds into the Tudor-knot domain; sequence QEGERVLCFHGPLLYEAKCVKVAIKDKQVKYFIHYSGWNKNWDEWVPESRV. Positions 77–143 are disordered; sequence QKANQEQYAE…RKKRARVDPT (67 aa). A sufficient for interaction with SIN3A region spans residues 94 to 227; the sequence is PGKKTSGLQQ…VAGIKEYFNV (134 aa). Lysine 104 is subject to N6-acetyllysine. The interaction with RB1-1 stretch occupies residues 125–191; sequence STSETPQPPR…FYLPAKKNVD (67 aa). Residues 149–303 form a sufficient for interaction with PHF12 region; that stretch reads TFMNRVEVKV…FLKYLAKNSA (155 aa). In terms of domain architecture, MRG spans 152–323; the sequence is NRVEVKVKIP…APPEYHRKAV (172 aa). The interaction with RB1-2 stretch occupies residues 284 to 305; that stretch reads LALLLNYLHDFLKYLAKNSATL.

As to quaternary structure, component of the NuA4 histone acetyltransferase complex which contains the catalytic subunit KAT5/TIP60 and the subunits EP400, TRRAP/PAF400, BRD8/SMAP, EPC1, DMAP1/DNMAP1, RUVBL1/TIP49, RUVBL2, ING3, actin, ACTL6A/BAF53A, MORF4L1/MRG15, MORF4L2/MRGX, MRGBP, YEATS4/GAS41, VPS72/YL1 and MEAF6. The NuA4 complex interacts with MYC and the adenovirus E1A protein. MORF4L1 may also participate in the formation of NuA4 related complexes which lack the KAT5/TIP60 catalytic subunit, but which include the SWI/SNF related protein SRCAP. Component of the mSin3A histone deacetylase complex, which includes SIN3A, HDAC2, ARID4B, MORF4L1, RBBP4/RbAp48, and RBBP7/RbAp46. May also interact with PHF12 and one or more as yet undefined members of the TLE (transducin-like enhancer of split) family of transcriptional repressors. Component of the SIN3B complex, which includes SIN3B, HDAC2 or HDAC1, PHF12 and MORF4L1. Interacts with RB1 and KAT8. Interacts with the N-terminus of MRFAP1. Found in a complex composed of MORF4L1, MRFAP1 and RB1. Interacts with the entire BRCA complex, which contains BRCA1, PALB2, BRCA2 and RAD51. Interacts with PALB2. Forms a complex with MSL1 and NUPR1.

The protein localises to the nucleus. Component of the NuA4 histone acetyltransferase (HAT) complex which is involved in transcriptional activation of select genes principally by acetylation of nucleosomal histones H4 and H2A. This modification may both alter nucleosome - DNA interactions and promote interaction of the modified histones with other proteins which positively regulate transcription. This complex may be required for the activation of transcriptional programs associated with oncogene and proto-oncogene mediated growth induction, tumor suppressor mediated growth arrest and replicative senescence, apoptosis, and DNA repair. The NuA4 complex ATPase and helicase activities seem to be, at least in part, contributed by the association of RUVBL1 and RUVBL2 with EP400. NuA4 may also play a direct role in DNA repair when directly recruited to sites of DNA damage. As part of the SIN3B complex represses transcription and counteracts the histone acetyltransferase activity of EP300 through the recognition H3K27ac marks by PHF12 and the activity of the histone deacetylase HDAC2. SIN3B complex is recruited downstream of the constitutively active genes transcriptional start sites through interaction with histones and mitigates histone acetylation and RNA polymerase II progression within transcribed regions contributing to the regulation of transcription. Required for homologous recombination repair (HRR) and resistance to mitomycin C (MMC). Involved in the localization of PALB2, BRCA2 and RAD51, but not BRCA1, to DNA-damage foci. The sequence is that of Mortality factor 4-like protein 1 (Morf4l1) from Rattus norvegicus (Rat).